We begin with the raw amino-acid sequence, 223 residues long: Deoxyribose-phosphate aldolase (223 aa).

The Proton donor/acceptor role is filled by D89. The active-site Schiff-base intermediate with acetaldehyde is the K152. K181 (proton donor/acceptor) is an active-site residue.

It belongs to the DeoC/FbaB aldolase family. DeoC type 1 subfamily.

It localises to the cytoplasm. It catalyses the reaction 2-deoxy-D-ribose 5-phosphate = D-glyceraldehyde 3-phosphate + acetaldehyde. The protein operates within carbohydrate degradation; 2-deoxy-D-ribose 1-phosphate degradation; D-glyceraldehyde 3-phosphate and acetaldehyde from 2-deoxy-alpha-D-ribose 1-phosphate: step 2/2. Functionally, catalyzes a reversible aldol reaction between acetaldehyde and D-glyceraldehyde 3-phosphate to generate 2-deoxy-D-ribose 5-phosphate. The sequence is that of Deoxyribose-phosphate aldolase from Listeria monocytogenes serotype 4a (strain HCC23).